We begin with the raw amino-acid sequence, 434 residues long: Glutamate-1-semialdehyde 2,1-aminomutase (434 aa).

Lysine 267 carries the post-translational modification N6-(pyridoxal phosphate)lysine.

The protein belongs to the class-III pyridoxal-phosphate-dependent aminotransferase family. HemL subfamily. In terms of assembly, homodimer. Requires pyridoxal 5'-phosphate as cofactor.

The protein localises to the cytoplasm. It carries out the reaction (S)-4-amino-5-oxopentanoate = 5-aminolevulinate. The protein operates within porphyrin-containing compound metabolism; protoporphyrin-IX biosynthesis; 5-aminolevulinate from L-glutamyl-tRNA(Glu): step 2/2. Its pathway is porphyrin-containing compound metabolism; chlorophyll biosynthesis. The chain is Glutamate-1-semialdehyde 2,1-aminomutase from Roseiflexus castenholzii (strain DSM 13941 / HLO8).